The chain runs to 348 residues: Protein RecA (348 aa).

65 to 72 (GPESSGKT) contacts ATP. Positions 328–348 (SKPQAETSARLATQEELADDY) are disordered.

It belongs to the RecA family.

The protein localises to the cytoplasm. In terms of biological role, can catalyze the hydrolysis of ATP in the presence of single-stranded DNA, the ATP-dependent uptake of single-stranded DNA by duplex DNA, and the ATP-dependent hybridization of homologous single-stranded DNAs. It interacts with LexA causing its activation and leading to its autocatalytic cleavage. The chain is Protein RecA from Ectopseudomonas oleovorans (Pseudomonas oleovorans).